A 318-amino-acid polypeptide reads, in one-letter code: Aspartate carbamoyltransferase catalytic subunit (318 aa).

Carbamoyl phosphate is bound by residues Arg59 and Thr60. An L-aspartate-binding site is contributed by Lys87. Carbamoyl phosphate is bound by residues Arg109, His137, and Gln140. Positions 170 and 224 each coordinate L-aspartate. The carbamoyl phosphate site is built by Gly265 and Pro266.

This sequence belongs to the aspartate/ornithine carbamoyltransferase superfamily. ATCase family. As to quaternary structure, heterododecamer (2C3:3R2) of six catalytic PyrB chains organized as two trimers (C3), and six regulatory PyrI chains organized as three dimers (R2).

It catalyses the reaction carbamoyl phosphate + L-aspartate = N-carbamoyl-L-aspartate + phosphate + H(+). Its pathway is pyrimidine metabolism; UMP biosynthesis via de novo pathway; (S)-dihydroorotate from bicarbonate: step 2/3. In terms of biological role, catalyzes the condensation of carbamoyl phosphate and aspartate to form carbamoyl aspartate and inorganic phosphate, the committed step in the de novo pyrimidine nucleotide biosynthesis pathway. In Rhizobium etli (strain CIAT 652), this protein is Aspartate carbamoyltransferase catalytic subunit.